The chain runs to 613 residues: Myrcene synthase, chloroplastic (613 aa).

The transit peptide at 1 to 46 (MQCMAVHQFAPLLSLLNCSRISSDFGRLFTPKTSTKSRSSTCHPIQ) directs the protein to the chloroplast. 3 residues coordinate (2E)-geranyl diphosphate: Arg-324, Asp-361, and Asp-365. Mg(2+) is bound by residues Asp-361 and Asp-365. The DDXXD motif signature appears at 361–365 (DDIYD). A helical transmembrane segment spans residues 455–475 (IEMAWLSIGGPVILVHAYFCF). The (2E)-geranyl diphosphate site is built by Arg-503 and Asp-506. 3 residues coordinate Mg(2+): Asp-506, Thr-510, and Glu-514.

It belongs to the terpene synthase family. Tpsb subfamily. It depends on Mg(2+) as a cofactor. Mn(2+) is required as a cofactor. As to expression, expressed in trichomes.

Its subcellular location is the plastid. The protein resides in the chloroplast membrane. The catalysed reaction is (2E)-geranyl diphosphate = beta-myrcene + diphosphate. It participates in secondary metabolite biosynthesis; terpenoid biosynthesis. Its function is as follows. Monoterpene synthase that catalyzes the formation of myrcene. Can use geranyl diphosphate as substrate, but not farnesyl diphosphate or geranylgeranyl diphosphate. The polypeptide is Myrcene synthase, chloroplastic (Humulus lupulus (European hop)).